The sequence spans 366 residues: tRNA/tmRNA (uracil-C(5))-methyltransferase (366 aa).

Gln-190, Tyr-218, Asn-223, Glu-239, and Asp-299 together coordinate S-adenosyl-L-methionine. The Nucleophile role is filled by Cys-324. The active-site Proton acceptor is the Glu-358.

This sequence belongs to the class I-like SAM-binding methyltransferase superfamily. RNA M5U methyltransferase family. TrmA subfamily.

The catalysed reaction is uridine(54) in tRNA + S-adenosyl-L-methionine = 5-methyluridine(54) in tRNA + S-adenosyl-L-homocysteine + H(+). The enzyme catalyses uridine(341) in tmRNA + S-adenosyl-L-methionine = 5-methyluridine(341) in tmRNA + S-adenosyl-L-homocysteine + H(+). Functionally, dual-specificity methyltransferase that catalyzes the formation of 5-methyluridine at position 54 (m5U54) in all tRNAs, and that of position 341 (m5U341) in tmRNA (transfer-mRNA). The protein is tRNA/tmRNA (uracil-C(5))-methyltransferase of Klebsiella pneumoniae subsp. pneumoniae (strain ATCC 700721 / MGH 78578).